Here is a 443-residue protein sequence, read N- to C-terminus: ATP-dependent protease ATPase subunit HslU (443 aa).

ATP contacts are provided by residues isoleucine 19, 61 to 66 (GVGKTE), aspartate 256, glutamate 321, and arginine 393.

This sequence belongs to the ClpX chaperone family. HslU subfamily. In terms of assembly, a double ring-shaped homohexamer of HslV is capped on each side by a ring-shaped HslU homohexamer. The assembly of the HslU/HslV complex is dependent on binding of ATP.

It is found in the cytoplasm. ATPase subunit of a proteasome-like degradation complex; this subunit has chaperone activity. The binding of ATP and its subsequent hydrolysis by HslU are essential for unfolding of protein substrates subsequently hydrolyzed by HslV. HslU recognizes the N-terminal part of its protein substrates and unfolds these before they are guided to HslV for hydrolysis. The protein is ATP-dependent protease ATPase subunit HslU of Ralstonia pickettii (strain 12J).